Reading from the N-terminus, the 940-residue chain is SWI/SNF-related matrix-associated actin-dependent regulator of chromatin subfamily A-like protein 1 (940 aa).

The disordered stretch occupies residues Met-1–Glu-155. Residue Ser-2 is modified to N-acetylserine. Mediates interaction with RPA2 regions lie at residues Ser-2–Ala-36 and Leu-11–Ala-36. The span at Gly-17–Gln-40 shows a compositional bias: basic and acidic residues. The stretch at Lys-18–Gln-40 forms a coiled coil. Polar residues-rich tracts occupy residues Lys-41–Leu-53 and Lys-68–Gln-95. A phosphoserine mark is found at Ser-125, Ser-131, Ser-153, and Ser-200. 2 consecutive HARP domains span residues Val-229–Glu-299 and Ser-325–Pro-396. A Helicase ATP-binding domain is found at Asn-442–Thr-597. Asp-455–Thr-462 contributes to the ATP binding site. A DESH box motif is present at residues Asp-546–His-549. The Nuclear localization signal motif lies at Arg-641–Trp-658. The interval Pro-662–Thr-682 is disordered. Residues Gly-669 to Arg-679 are compositionally biased toward pro residues. The region spanning Ser-708–Ala-864 is the Helicase C-terminal domain. Residues Glu-899–Thr-918 form a disordered region.

Belongs to the SNF2/RAD54 helicase family. SMARCAL1 subfamily. Interacts with RPA2; the interaction is direct and mediates the recruitment by the RPA complex of SMARCAL1 to sites of DNA damage. In terms of processing, DNA damage-regulated phosphorylation by kinases that may include ATM, ATR and PRKDC. Expressed in mature oocytes, 2-4 cell stage embryos and 8-16 cell stage embryos. Expressed at lower levels in morulae and blastocysts.

The protein localises to the nucleus. It catalyses the reaction ATP + H2O = ADP + phosphate + H(+). ATP-dependent annealing helicase that binds selectively to fork DNA relative to ssDNA or dsDNA and catalyzes the rewinding of the stably unwound DNA. Rewinds single-stranded DNA bubbles that are stably bound by replication protein A (RPA). Acts throughout the genome to reanneal stably unwound DNA, performing the opposite reaction of many enzymes, such as helicases and polymerases, that unwind DNA. May play an important role in DNA damage response by acting at stalled replication forks. The sequence is that of SWI/SNF-related matrix-associated actin-dependent regulator of chromatin subfamily A-like protein 1 (SMARCAL1) from Bos taurus (Bovine).